The chain runs to 219 residues: uncharacterized protein (219 aa).

2 helical membrane passes run Met-8–Val-28 and Gly-194–Phe-214.

It localises to the cell membrane. This is an uncharacterized protein from Archaeoglobus fulgidus (strain ATCC 49558 / DSM 4304 / JCM 9628 / NBRC 100126 / VC-16).